The chain runs to 183 residues: Adenylate kinase (183 aa).

Residue 12–17 (GAGKGT) participates in ATP binding. The NMP stretch occupies residues 32–61 (STGDLLRSEVAAGTALGQEAEAVMNRGELV). AMP contacts are provided by residues threonine 33, arginine 38, 59-61 (ELV), 86-89 (GFPR), and glutamine 93. Residues 127–133 (ARGRDDD) form an LID region. Arginine 128 is a binding site for ATP. 2 residues coordinate AMP: arginine 130 and arginine 141. Glycine 169 provides a ligand contact to ATP.

Belongs to the adenylate kinase family. In terms of assembly, monomer.

It localises to the cytoplasm. The enzyme catalyses AMP + ATP = 2 ADP. It participates in purine metabolism; AMP biosynthesis via salvage pathway; AMP from ADP: step 1/1. Functionally, catalyzes the reversible transfer of the terminal phosphate group between ATP and AMP. Plays an important role in cellular energy homeostasis and in adenine nucleotide metabolism. The polypeptide is Adenylate kinase (Parasynechococcus marenigrum (strain WH8102)).